The chain runs to 271 residues: Coiled-coil domain-containing protein ORF29 (271 aa).

Positions 1 to 39 (MNEKTESEIFEEQNSLYKPIKQEKKTPSTPESEDKNDQS) are disordered. The segment covering 20–37 (IKQEKKTPSTPESEDKND) has biased composition (basic and acidic residues). A coiled-coil region spans residues 208–228 (RATQTQEILLNSLRKNLQMLE).

This Helicobacter pylori (strain 35A) protein is Coiled-coil domain-containing protein ORF29.